We begin with the raw amino-acid sequence, 271 residues long: ABC transporter I family member 10 (271 aa).

In terms of domain architecture, ABC transporter spans 40 to 267 (VECRNLCFSV…IKAKQSSYID (228 aa)). 77–84 (GPNGCGKS) provides a ligand contact to ATP.

The protein belongs to the ABC transporter superfamily. ABCI family.

The sequence is that of ABC transporter I family member 10 (ABCI10) from Arabidopsis thaliana (Mouse-ear cress).